The primary structure comprises 353 residues: S-adenosylmethionine:tRNA ribosyltransferase-isomerase (353 aa).

The protein belongs to the QueA family. In terms of assembly, monomer.

The protein localises to the cytoplasm. The catalysed reaction is 7-aminomethyl-7-carbaguanosine(34) in tRNA + S-adenosyl-L-methionine = epoxyqueuosine(34) in tRNA + adenine + L-methionine + 2 H(+). It participates in tRNA modification; tRNA-queuosine biosynthesis. Its function is as follows. Transfers and isomerizes the ribose moiety from AdoMet to the 7-aminomethyl group of 7-deazaguanine (preQ1-tRNA) to give epoxyqueuosine (oQ-tRNA). This Paraburkholderia phymatum (strain DSM 17167 / CIP 108236 / LMG 21445 / STM815) (Burkholderia phymatum) protein is S-adenosylmethionine:tRNA ribosyltransferase-isomerase.